The primary structure comprises 511 residues: Maturase K (511 aa).

It belongs to the intron maturase 2 family. MatK subfamily.

The protein resides in the plastid. The protein localises to the chloroplast. Functionally, usually encoded in the trnK tRNA gene intron. Probably assists in splicing its own and other chloroplast group II introns. In Campsis radicans (Trumpet creeper), this protein is Maturase K.